The sequence spans 183 residues: MKKKTTLSEEDQALFRQLMAGTRKIKQDTIVHRPQSKKISEVPVKRLIQEQADASHYFSDEFQPLLNTEGPVKYVRPDVSHFEAKKLRRGDYSPELFLDLHGLTQLQAKQELGALIAACRREHVFCACVMHGHGKHILKQQTPLWLAQHPHVMAFHQAPKEYGGDAALLVLIEVEEWLPPELP.

The 76-residue stretch at 98-173 (LDLHGLTQLQ…GDAALLVLIE (76 aa)) folds into the Smr domain.

Belongs to the SmrB family. As to quaternary structure, associates with collided ribosomes, but not with correctly translating polysomes.

Acts as a ribosome collision sensor. Detects stalled/collided disomes (pairs of ribosomes where the leading ribosome is stalled and a second ribosome has collided with it) and endonucleolytically cleaves mRNA at the 5' boundary of the stalled ribosome. Stalled/collided disomes form a new interface (primarily via the 30S subunits) that binds SmrB. Cleaved mRNA becomes available for tmRNA ligation, leading to ribosomal subunit dissociation and rescue of stalled ribosomes. The chain is Ribosome rescue factor SmrB from Shigella dysenteriae serotype 1 (strain Sd197).